A 435-amino-acid chain; its full sequence is Methylenetetrahydrofolate--tRNA-(uracil-5-)-methyltransferase TrmFO (435 aa).

FAD is bound at residue Gly-10–Gly-15.

It belongs to the MnmG family. TrmFO subfamily. It depends on FAD as a cofactor.

The protein localises to the cytoplasm. The catalysed reaction is uridine(54) in tRNA + (6R)-5,10-methylene-5,6,7,8-tetrahydrofolate + NADH + H(+) = 5-methyluridine(54) in tRNA + (6S)-5,6,7,8-tetrahydrofolate + NAD(+). It carries out the reaction uridine(54) in tRNA + (6R)-5,10-methylene-5,6,7,8-tetrahydrofolate + NADPH + H(+) = 5-methyluridine(54) in tRNA + (6S)-5,6,7,8-tetrahydrofolate + NADP(+). Its function is as follows. Catalyzes the folate-dependent formation of 5-methyl-uridine at position 54 (M-5-U54) in all tRNAs. The chain is Methylenetetrahydrofolate--tRNA-(uracil-5-)-methyltransferase TrmFO from Bacillus velezensis (strain DSM 23117 / BGSC 10A6 / LMG 26770 / FZB42) (Bacillus amyloliquefaciens subsp. plantarum).